A 400-amino-acid polypeptide reads, in one-letter code: Nicotinate phosphoribosyltransferase (400 aa).

At His-220 the chain carries Phosphohistidine; by autocatalysis.

The protein belongs to the NAPRTase family. In terms of processing, transiently phosphorylated on a His residue during the reaction cycle. Phosphorylation strongly increases the affinity for substrates and increases the rate of nicotinate D-ribonucleotide production. Dephosphorylation regenerates the low-affinity form of the enzyme, leading to product release.

It catalyses the reaction nicotinate + 5-phospho-alpha-D-ribose 1-diphosphate + ATP + H2O = nicotinate beta-D-ribonucleotide + ADP + phosphate + diphosphate. It participates in cofactor biosynthesis; NAD(+) biosynthesis; nicotinate D-ribonucleotide from nicotinate: step 1/1. Functionally, catalyzes the synthesis of beta-nicotinate D-ribonucleotide from nicotinate and 5-phospho-D-ribose 1-phosphate at the expense of ATP. The sequence is that of Nicotinate phosphoribosyltransferase from Escherichia fergusonii (strain ATCC 35469 / DSM 13698 / CCUG 18766 / IAM 14443 / JCM 21226 / LMG 7866 / NBRC 102419 / NCTC 12128 / CDC 0568-73).